A 332-amino-acid polypeptide reads, in one-letter code: Acetyl-coenzyme A carboxylase carboxyl transferase subunit beta (332 aa).

Residues 24–293 form the CoA carboxyltransferase N-terminal domain; that stretch reads LWIKCPDSGH…PEVIVESEPE (270 aa). The disordered stretch occupies residues 288 to 332; the sequence is VESEPEPEPEPVVAEIIPPTSDLPVSAPAPAPVAAQTPAPAAPSA. Over residues 298 to 332 the composition is skewed to low complexity; sequence PVVAEIIPPTSDLPVSAPAPAPVAAQTPAPAAPSA.

This sequence belongs to the AccD/PCCB family. Acetyl-CoA carboxylase is a heterohexamer composed of biotin carboxyl carrier protein (AccB), biotin carboxylase (AccC) and two subunits each of ACCase subunit alpha (AccA) and ACCase subunit beta (AccD).

Its subcellular location is the cytoplasm. It carries out the reaction N(6)-carboxybiotinyl-L-lysyl-[protein] + acetyl-CoA = N(6)-biotinyl-L-lysyl-[protein] + malonyl-CoA. It functions in the pathway lipid metabolism; malonyl-CoA biosynthesis; malonyl-CoA from acetyl-CoA: step 1/1. Its function is as follows. Component of the acetyl coenzyme A carboxylase (ACC) complex. Biotin carboxylase (BC) catalyzes the carboxylation of biotin on its carrier protein (BCCP) and then the CO(2) group is transferred by the transcarboxylase to acetyl-CoA to form malonyl-CoA. In Rhodopseudomonas palustris (strain BisB18), this protein is Acetyl-coenzyme A carboxylase carboxyl transferase subunit beta.